The chain runs to 510 residues: ATP synthase subunit alpha (510 aa).

An ATP-binding site is contributed by 169 to 176 (GDRQTGKT).

It belongs to the ATPase alpha/beta chains family. As to quaternary structure, F-type ATPases have 2 components, CF(1) - the catalytic core - and CF(0) - the membrane proton channel. CF(1) has five subunits: alpha(3), beta(3), gamma(1), delta(1), epsilon(1). CF(0) has four main subunits: a(1), b(1), b'(1) and c(9-12).

Its subcellular location is the cell inner membrane. It carries out the reaction ATP + H2O + 4 H(+)(in) = ADP + phosphate + 5 H(+)(out). In terms of biological role, produces ATP from ADP in the presence of a proton gradient across the membrane. The alpha chain is a regulatory subunit. In Rhodopseudomonas palustris (strain BisB18), this protein is ATP synthase subunit alpha.